The sequence spans 124 residues: Small ribosomal subunit protein uS12 (124 aa).

A 3-methylthioaspartic acid modification is found at D89.

It belongs to the universal ribosomal protein uS12 family. In terms of assembly, part of the 30S ribosomal subunit. Contacts proteins S8 and S17. May interact with IF1 in the 30S initiation complex.

With S4 and S5 plays an important role in translational accuracy. Functionally, interacts with and stabilizes bases of the 16S rRNA that are involved in tRNA selection in the A site and with the mRNA backbone. Located at the interface of the 30S and 50S subunits, it traverses the body of the 30S subunit contacting proteins on the other side and probably holding the rRNA structure together. The combined cluster of proteins S8, S12 and S17 appears to hold together the shoulder and platform of the 30S subunit. The sequence is that of Small ribosomal subunit protein uS12 from Campylobacter hominis (strain ATCC BAA-381 / DSM 21671 / CCUG 45161 / LMG 19568 / NCTC 13146 / CH001A).